Here is an 88-residue protein sequence, read N- to C-terminus: RNA-binding protein Hfq (88 aa).

Positions 9–68 (DPFLNALRCERIPVSIYLVNGIKLQGQIESFDQFVILLKNTVNQMVYKHAISTVVPARAV) constitute a Sm domain. The tract at residues 66–88 (RAVSHHTASDRPQGERPQETTEE) is disordered. The segment covering 72–88 (TASDRPQGERPQETTEE) has biased composition (basic and acidic residues).

Belongs to the Hfq family. As to quaternary structure, homohexamer.

RNA chaperone that binds small regulatory RNA (sRNAs) and mRNAs to facilitate mRNA translational regulation in response to envelope stress, environmental stress and changes in metabolite concentrations. Also binds with high specificity to tRNAs. In Aliivibrio salmonicida (strain LFI1238) (Vibrio salmonicida (strain LFI1238)), this protein is RNA-binding protein Hfq.